The sequence spans 219 residues: GPI ethanolamine phosphate transferase, stabilizing subunit (219 aa).

The next 6 helical transmembrane spans lie at Tyr11 to Val31, Thr42 to Val62, Cys86 to Ile106, Phe113 to Pro133, Leu155 to Leu175, and Thr189 to Trp209.

The protein belongs to the PIGF family. As to quaternary structure, part of the ethanolamine phosphate transferase 3 complex composed by PIGO and PIGF. Part of the ethanolamine phosphate transferase 2 complex with PIGG. PIGF is required to stabilize PIGG and PIGO.

It is found in the endoplasmic reticulum membrane. It participates in glycolipid biosynthesis; glycosylphosphatidylinositol-anchor biosynthesis. Stabilizing subunit of the ethanolamine phosphate transferase 3 and ethanolamine phosphate transferase 2 complexes that sequentially transfer an ethanolamine phosphate (EtNP) from a phosphatidylethanolamine (PE) to the 6-OH position of the third alpha-1,2-linked mannose and the second alpha-1,6-linked mannose of the alpha-D-Man-(1-&gt;2)-alpha-D-Man-(1-&gt;6)-2-PEtn-alpha-D-Man-(1-&gt;4)-alpha-D-GlcN-(1-&gt;6)-(1-radyl,2-acyl-sn-glycero-3-phospho)-2-acyl-inositol (also termed H6) intermediate to generate a 6-PEtn-alpha-D-Man-(1-&gt;2)-6-PEtn-alpha-D-Man-(1-&gt;6)-2-PEtn-alpha-D-Man-(1-&gt;4)-alpha-D-GlcN-(1-&gt;6)-(1-radyl,2-acyl-sn-glycero-3-phospho)-2-acyl-inositol (also termed H8). Participates in the tenth and eleventh steps of the glycosylphosphatidylinositol-anchor biosynthesis, in association with PIGO and PIGG, respectively. The protein is GPI ethanolamine phosphate transferase, stabilizing subunit of Mus musculus (Mouse).